The primary structure comprises 284 residues: Proteasome subunit beta 1 (284 aa).

Positions Met-1 to Gly-54 are cleaved as a propeptide — removed in mature form; by autocatalysis. Thr-55 functions as the Nucleophile in the catalytic mechanism. The segment covering Arg-256 to Pro-277 has biased composition (basic and acidic residues). A disordered region spans residues Arg-256–Met-284.

It belongs to the peptidase T1B family. In terms of assembly, the 20S proteasome core is composed of 14 alpha and 14 beta subunits that assemble into four stacked heptameric rings, resulting in a barrel-shaped structure. The two inner rings, each composed of seven catalytic beta subunits, are sandwiched by two outer rings, each composed of seven alpha subunits. The catalytic chamber with the active sites is on the inside of the barrel. Has a gated structure, the ends of the cylinder being occluded by the N-termini of the alpha-subunits. Is capped by the proteasome-associated ATPase, ARC.

Its subcellular location is the cytoplasm. The catalysed reaction is Cleavage of peptide bonds with very broad specificity.. The protein operates within protein degradation; proteasomal Pup-dependent pathway. Its activity is regulated as follows. The formation of the proteasomal ATPase ARC-20S proteasome complex, likely via the docking of the C-termini of ARC into the intersubunit pockets in the alpha-rings, may trigger opening of the gate for substrate entry. Interconversion between the open-gate and close-gate conformations leads to a dynamic regulation of the 20S proteasome proteolysis activity. In terms of biological role, component of the proteasome core, a large protease complex with broad specificity involved in protein degradation. The chain is Proteasome subunit beta 1 from Streptomyces avermitilis (strain ATCC 31267 / DSM 46492 / JCM 5070 / NBRC 14893 / NCIMB 12804 / NRRL 8165 / MA-4680).